The sequence spans 509 residues: DNA nucleotidylexotransferase (509 aa).

Positions 1-24 (MDPPRASHLSPRKKRPRQTGALMA) are disordered. The Nuclear localization signal signature appears at 11-17 (PRKKRPR). Residues 27–124 (PQDIKFQDLV…KPVEMTGKHQ (98 aa)) form the BRCT domain. The residue at position 134 (Ser134) is a Phosphoserine. The tract at residues 151-509 (SQYACQRRTT…DYIEPWERNA (359 aa)) is mediates interaction with DNTTIP2. Residues 258–262 (VGLKT) are involved in DNA binding. Residues 333-338 (GFRRGK) and 342-345 (HDVD) contribute to the a 2'-deoxyribonucleoside 5'-triphosphate site. Mg(2+) contacts are provided by Asp343, Asp345, and Asp433. A 2'-deoxyribonucleoside 5'-triphosphate is bound at residue 448–449 (GW).

Belongs to the DNA polymerase type-X family. In terms of assembly, interacts with PRP19 and DNTTIP1. Forms a ternary complex with DNTTIP2 and core histone. Released from this complex by PCNA. Interacts with TRERF1. Mg(2+) is required as a cofactor.

It is found in the nucleus. It carries out the reaction DNA(n) + a 2'-deoxyribonucleoside 5'-triphosphate = DNA(n+1) + diphosphate. In terms of biological role, template-independent DNA polymerase which catalyzes the random addition of deoxynucleoside 5'-triphosphate to the 3'-end of a DNA initiator. One of the in vivo functions of this enzyme is the addition of nucleotides at the junction (N region) of rearranged Ig heavy chain and T-cell receptor gene segments during the maturation of B- and T-cells. The protein is DNA nucleotidylexotransferase (DNTT) of Homo sapiens (Human).